The primary structure comprises 73 residues: UPF0235 protein LA_1736 (73 aa).

It belongs to the UPF0235 family.

The protein is UPF0235 protein LA_1736 of Leptospira interrogans serogroup Icterohaemorrhagiae serovar Lai (strain 56601).